The chain runs to 415 residues: Proline-serine-threonine phosphatase-interacting protein 1 (415 aa).

The F-BAR domain maps to 5–264 (LQFRDAFWCR…TLEGCDVEGD (260 aa)). 2 coiled-coil regions span residues 94-133 (LALA…KLSL) and 162-215 (SANG…TCEA). Residue Ser318 is modified to Phosphoserine. Position 344 is a phosphotyrosine; by ABL1 (Tyr344). The SH3 domain occupies 358 to 415 (SSAQDYRALYDYTAQNSDELDISAGDILAVILEGEDGWWTVERNGQRGFVPGSYLEKL).

In terms of assembly, homodimer. Homotrimer. Interacts (via coiled-coil domain) with CD2AP, PTPN12 and PTPN18. Interacts (via SH3 domain) with ABL1 and WAS. Interacts (via SH3 and coiled-coil domains) with MEFV (via B-box zinc finger); the interaction allows binding of MEFV to PYCARD and facilitates formation of PYCARD pyroptosomes. Interacts with DNM2 and FASLG. Interacts with CD2. Post-translationally, dephosphorylated on Tyr-344 by PTPN18, this event negatively regulates the association of PSTPIP1 with SH2 domain-containing proteins as tyrosine kinase. Phosphorylation of Tyr-344 is probably required for subsequent phosphorylation at other tyrosine residues. Phosphorylation is induced by activation of the EGFR and PDGFR in a ABL1 dependent manner. The phosphorylation regulates the interaction with WAS and with MEFV. As to expression, highly expressed in adult lung and spleen, and weakly expressed in testis, muscle, kidney, brain and heart. Highly expressed in spleen and thymus, moderately in lung, brain and muscle, and weakly expressed in heart and liver (at protein level).

Its subcellular location is the cytoplasm. The protein localises to the perinuclear region. The protein resides in the cell projection. It is found in the lamellipodium. It localises to the cleavage furrow. Its subcellular location is the cytoskeleton. The protein localises to the cell membrane. The protein resides in the uropodium. Its function is as follows. Involved in regulation of the actin cytoskeleton. May regulate WAS actin-bundling activity. Bridges the interaction between ABL1 and PTPN18 leading to ABL1 dephosphorylation. May play a role as a scaffold protein between PTPN12 and WAS and allow PTPN12 to dephosphorylate WAS. Has the potential to physically couple CD2 and CD2AP to WAS. Acts downstream of CD2 and CD2AP to recruit WAS to the T-cell:APC contact site so as to promote the actin polymerization required for synapse induction during T-cell activation. Down-regulates CD2-stimulated adhesion through the coupling of PTPN12 to CD2. Also has a role in innate immunity and the inflammatory response. Recruited to inflammasomes by MEFV. Induces formation of pyroptosomes, large supramolecular structures composed of oligomerized PYCARD dimers which form prior to inflammatory apoptosis. Binding to MEFV allows MEFV to bind to PYCARD and facilitates pyroptosome formation. Regulates endocytosis and cell migration in neutrophils. The sequence is that of Proline-serine-threonine phosphatase-interacting protein 1 (Pstpip1) from Mus musculus (Mouse).